Here is a 482-residue protein sequence, read N- to C-terminus: Reduced viability upon starvation protein 167 (482 aa).

Ser-2 bears the N-acetylserine mark. One can recognise a BAR domain in the interval 17 to 254; that stretch reads FRQKFKMGEQ…YFDLNSDIVE (238 aa). Coiled-coil stretches lie at residues 31-64 and 174-204; these read VYED…NGML and AKDE…LKTQ. Residue Lys-242 forms a Glycyl lysine isopeptide (Lys-Gly) (interchain with G-Cter in ubiquitin) linkage. Ser-299, Ser-321, and Ser-379 each carry phosphoserine; by FUS3 and PHO85. The disordered stretch occupies residues 382 to 407; it reads LTGLGFQQSPQQQQGPPPAYSNPLTS. One can recognise an SH3 domain in the interval 421–482; the sequence is PGVETVTALY…PGNYVQLNKN (62 aa). Lys-481 is covalently cross-linked (Glycyl lysine isopeptide (Lys-Gly) (interchain with G-Cter in ubiquitin)).

Binds to actin. Interacts with ABP1, GYL1, GYP5, PCL2 and YBR108W. In terms of processing, phosphorylated redundantly by cyclin-dependent kinase PHO85 in association with PCL1,2-type cyclins or by MAP kinase FUS3. Phosphorylation inhibits interaction with complexes involved in actin cytoskeleton function.

The protein localises to the cytoplasm. Its subcellular location is the cytoskeleton. Its function is as follows. Component of a cytoskeletal structure that is required for the formation of endocytic vesicles at the plasma membrane level. Could be implicated in cytoskeletal reorganization in response to environmental stresses and could act in the budding site selection mechanism. In Saccharomyces cerevisiae (strain ATCC 204508 / S288c) (Baker's yeast), this protein is Reduced viability upon starvation protein 167 (RVS167).